A 160-amino-acid polypeptide reads, in one-letter code: Nucleotide-binding protein VV1_2655 (160 aa).

Belongs to the YajQ family.

Nucleotide-binding protein. The protein is Nucleotide-binding protein VV1_2655 of Vibrio vulnificus (strain CMCP6).